The sequence spans 97 residues: Small ribosomal subunit protein bS6 (97 aa).

Belongs to the bacterial ribosomal protein bS6 family.

Functionally, binds together with bS18 to 16S ribosomal RNA. The sequence is that of Small ribosomal subunit protein bS6 from Limosilactobacillus fermentum (strain NBRC 3956 / LMG 18251) (Lactobacillus fermentum).